The primary structure comprises 152 residues: NAD(P)H-quinone oxidoreductase subunit N (152 aa).

Belongs to the complex I NdhN subunit family. NDH-1 can be composed of about 15 different subunits; different subcomplexes with different compositions have been identified which probably have different functions.

It is found in the cellular thylakoid membrane. The enzyme catalyses a plastoquinone + NADH + (n+1) H(+)(in) = a plastoquinol + NAD(+) + n H(+)(out). The catalysed reaction is a plastoquinone + NADPH + (n+1) H(+)(in) = a plastoquinol + NADP(+) + n H(+)(out). Its function is as follows. NDH-1 shuttles electrons from an unknown electron donor, via FMN and iron-sulfur (Fe-S) centers, to quinones in the respiratory and/or the photosynthetic chain. The immediate electron acceptor for the enzyme in this species is believed to be plastoquinone. Couples the redox reaction to proton translocation, and thus conserves the redox energy in a proton gradient. Cyanobacterial NDH-1 also plays a role in inorganic carbon-concentration. The sequence is that of NAD(P)H-quinone oxidoreductase subunit N from Prochlorococcus marinus (strain SARG / CCMP1375 / SS120).